The sequence spans 278 residues: Ribosomal RNA small subunit methyltransferase J (278 aa).

S-adenosyl-L-methionine is bound by residues glutamate 143–arginine 144 and aspartate 197.

The protein belongs to the methyltransferase superfamily. RsmJ family.

It localises to the cytoplasm. The enzyme catalyses guanosine(1516) in 16S rRNA + S-adenosyl-L-methionine = N(2)-methylguanosine(1516) in 16S rRNA + S-adenosyl-L-homocysteine + H(+). Functionally, specifically methylates the guanosine in position 1516 of 16S rRNA. This chain is Ribosomal RNA small subunit methyltransferase J, found in Marinobacter nauticus (strain ATCC 700491 / DSM 11845 / VT8) (Marinobacter aquaeolei).